A 1140-amino-acid polypeptide reads, in one-letter code: uncharacterized protein (1140 aa).

Helical transmembrane passes span Phe8–Thr28 and Ile1098–Val1118.

This sequence to M.pneumoniae MPN_375 (in the N-terminal section), M.pneumoniae MPN_374 (in the central section) and M.pneumoniae MPN_373 (in the C-terminal section).

Its subcellular location is the cell membrane. This is an uncharacterized protein from Mycoplasma pneumoniae (strain ATCC 29342 / M129 / Subtype 1) (Mycoplasmoides pneumoniae).